Consider the following 294-residue polypeptide: 4-hydroxybenzoate octaprenyltransferase (294 aa).

Helical transmembrane passes span 37 to 57, 101 to 121, 142 to 162, 169 to 189, 219 to 239, 241 to 261, and 271 to 293; these read LWAMWMAAGGPPGWTLFWIFF, LAVAAVLALIALALILPLNAL, FFAIPQAYLGIAFGFGIPMAF, VPFVAWLMLLANVFWAIAYDT, IMICYAVFLGLMAWAGSLLGL, WPYYAGLVAAAGMAGYHYTLI, and AAFRHNNWLGACVFAGTFVAYLL.

It belongs to the UbiA prenyltransferase family. Requires Mg(2+) as cofactor.

It localises to the cell inner membrane. It carries out the reaction all-trans-octaprenyl diphosphate + 4-hydroxybenzoate = 4-hydroxy-3-(all-trans-octaprenyl)benzoate + diphosphate. It participates in cofactor biosynthesis; ubiquinone biosynthesis. Functionally, catalyzes the prenylation of para-hydroxybenzoate (PHB) with an all-trans polyprenyl group. Mediates the second step in the final reaction sequence of ubiquinone-8 (UQ-8) biosynthesis, which is the condensation of the polyisoprenoid side chain with PHB, generating the first membrane-bound Q intermediate 3-octaprenyl-4-hydroxybenzoate. This chain is 4-hydroxybenzoate octaprenyltransferase, found in Cupriavidus metallidurans (strain ATCC 43123 / DSM 2839 / NBRC 102507 / CH34) (Ralstonia metallidurans).